The following is a 193-amino-acid chain: Probable DNA-directed RNA polymerase subunit delta (193 aa).

Residues 14–83 form the HTH HARE-type domain; that stretch reads LSMIEVARAI…GDNKWGLRSW (70 aa). 2 stretches are compositionally biased toward acidic residues: residues 119-133 and 143-193; these read EDAI…EDEN and YDND…ETND. Positions 119–193 are disordered; that stretch reads EDAIDYNDDD…DDDYEDETND (75 aa).

It belongs to the RpoE family. In terms of assembly, RNAP is composed of a core of 2 alpha, a beta and a beta' subunits. The core is associated with a delta subunit and one of several sigma factors.

Its function is as follows. Participates in both the initiation and recycling phases of transcription. In the presence of the delta subunit, RNAP displays an increased specificity of transcription, a decreased affinity for nucleic acids, and an increased efficiency of RNA synthesis because of enhanced recycling. The chain is Probable DNA-directed RNA polymerase subunit delta from Streptococcus thermophilus (strain CNRZ 1066).